A 758-amino-acid chain; its full sequence is Vesicular-fusion protein SEC18 (758 aa).

At Ser-226 the chain carries Phosphoserine. ATP-binding positions include 281–288 and 564–571; these read GPPGTGKT and GPAGSGKT.

The protein belongs to the AAA ATPase family. Homohexamer. Binds to SEC17.

The protein resides in the cytoplasm. In terms of biological role, required for vesicle-mediated transport. Catalyzes the fusion of transport vesicles within the Golgi cisternae. Is also required for transport from the endoplasmic reticulum to the Golgi stack. Seems to function as a fusion protein required for the delivery of cargo proteins to all compartments of the Golgi stack independent of vesicle origin. The sequence is that of Vesicular-fusion protein SEC18 (SEC18) from Saccharomyces cerevisiae (strain ATCC 204508 / S288c) (Baker's yeast).